The chain runs to 263 residues: Antigen 10-3 (263 aa).

Residues 1-21 (MNIYLIGILCIVGLIISQGST) form the signal peptide. Residues 70–207 (GNKKDKQPTQ…QINDGTSDKP (138 aa)) are disordered. Residues 78 to 90 (TQKTTPKPTTPKQ) are compositionally biased toward low complexity. 5 tandem repeats follow at residues 81 to 107 (TTPK…TIKR), 108 to 134 (TTPK…TIKR), 135 to 161 (TTPK…TIKR), 162 to 188 (TTPK…TIKR), and 189 to 206 (TTPK…TSDK). Positions 81–189 (TTPKPTTPKQ…TSDTHTIKRT (109 aa)) are 5 X 27 AA tandem repeats. Composition is skewed to basic and acidic residues over residues 95–104 (TSDKTSDTHT), 122–131 (TSDKTSDTHT), 149–158 (TSDKTSDTHT), and 176–185 (TSDKTSDTHT).

This chain is Antigen 10-3, found in Schistosoma mansoni (Blood fluke).